A 557-amino-acid polypeptide reads, in one-letter code: Kelch repeat and BTB domain-containing protein 2 (557 aa).

The region spanning 26-95 (CDVIITIRDG…LYNRHISSMN (70 aa)) is the BTB domain. Residues 143–223 (IVKYIKRMLM…CIDIQNLDKK (81 aa)) enclose the BACK domain. Kelch repeat units lie at residues 305–352 (EIII…VIDD), 353–399 (TIYA…VLDQ), and 415–464 (SVHA…SHED).

As to quaternary structure, interacts (via BTB domain) with host CUL3.

It localises to the host cytoplasm. Functionally, probable substrate-specific adapter of CUL3-containing E3 ubiquitin-protein ligases which mediate the ubiquitination and subsequent proteasomal degradation of host target proteins. This is Kelch repeat and BTB domain-containing protein 2 (KBTB2) from Cowpox virus (strain Brighton Red) (CPV).